Reading from the N-terminus, the 98-residue chain is Citrate lyase acyl carrier protein (98 aa).

Residue Ser-14 is modified to O-(phosphoribosyl dephospho-coenzyme A)serine.

It belongs to the CitD family. Oligomer with a subunit composition of (alpha,beta,gamma)6.

The protein localises to the cytoplasm. In terms of biological role, covalent carrier of the coenzyme of citrate lyase. The sequence is that of Citrate lyase acyl carrier protein from Escherichia coli O127:H6 (strain E2348/69 / EPEC).